A 63-amino-acid polypeptide reads, in one-letter code: Large ribosomal subunit protein uL29 (63 aa).

It belongs to the universal ribosomal protein uL29 family.

In Mannheimia succiniciproducens (strain KCTC 0769BP / MBEL55E), this protein is Large ribosomal subunit protein uL29.